A 227-amino-acid polypeptide reads, in one-letter code: 7-cyano-7-deazaguanine synthase (227 aa).

16-26 is a binding site for ATP; the sequence is FSGGQDSTTCL. The Zn(2+) site is built by Cys-194, Cys-202, Cys-205, and Cys-208.

The protein belongs to the QueC family. Requires Zn(2+) as cofactor.

The catalysed reaction is 7-carboxy-7-deazaguanine + NH4(+) + ATP = 7-cyano-7-deazaguanine + ADP + phosphate + H2O + H(+). Its pathway is purine metabolism; 7-cyano-7-deazaguanine biosynthesis. Its function is as follows. Catalyzes the ATP-dependent conversion of 7-carboxy-7-deazaguanine (CDG) to 7-cyano-7-deazaguanine (preQ(0)). In Haemophilus influenzae (strain PittEE), this protein is 7-cyano-7-deazaguanine synthase.